Here is a 149-residue protein sequence, read N- to C-terminus: Inner membrane protein YdcZ (149 aa).

At 1–4 (MNQS) the chain is on the periplasmic side. Residues 5 to 25 (LTLAFLIAAGIGLVVQNTLMV) form a helical membrane-spanning segment. The Cytoplasmic portion of the chain corresponds to 26–33 (RITQTSST). A helical transmembrane segment spans residues 34 to 54 (ILIAMLLNSLVGIVLFVSILW). Over 55-70 (FKQGMAGFGELVSSVR) the chain is Periplasmic. A helical membrane pass occupies residues 71–91 (WWTLIPGLLGSFFVFASISGY). At 92–93 (QN) the chain is on the cytoplasmic side. Residues 94–114 (VGAATTIAVLVASQLIGGLML) form a helical membrane-spanning segment. The Periplasmic segment spans residues 115–123 (DIFRSHGVP). Residues 124–144 (LRALFGPICGAILLVVGAWLV) form a helical membrane-spanning segment. Residues 145–149 (ARRSF) are Cytoplasmic-facing.

It localises to the cell inner membrane. This Escherichia coli (strain K12) protein is Inner membrane protein YdcZ (ydcZ).